The chain runs to 276 residues: Undecaprenyl-diphosphatase (276 aa).

A run of 7 helical transmembrane segments spans residues 12–34, 43–63, 85–105, 108–128, 185–205, 218–238, and 249–269; these read LGIV…IVVG, TATA…MWEF, FNLL…ADLI, WLFN…IMLW, TEFS…YSLF, IFAI…RALL, and FAWY…LHLI.

This sequence belongs to the UppP family.

Its subcellular location is the cell inner membrane. The enzyme catalyses di-trans,octa-cis-undecaprenyl diphosphate + H2O = di-trans,octa-cis-undecaprenyl phosphate + phosphate + H(+). Functionally, catalyzes the dephosphorylation of undecaprenyl diphosphate (UPP). Confers resistance to bacitracin. The chain is Undecaprenyl-diphosphatase from Ectopseudomonas mendocina (strain ymp) (Pseudomonas mendocina).